The sequence spans 270 residues: Eukaryotic translation initiation factor 3 subunit G-1 (270 aa).

In terms of domain architecture, RRM spans Ala189–Pro267.

It belongs to the eIF-3 subunit G family. As to quaternary structure, component of the eukaryotic translation initiation factor 3 (eIF-3) complex. The eIF-3 complex interacts with pix.

The protein localises to the cytoplasm. Its function is as follows. RNA-binding component of the eukaryotic translation initiation factor 3 (eIF-3) complex, which is involved in protein synthesis of a specialized repertoire of mRNAs and, together with other initiation factors, stimulates binding of mRNA and methionyl-tRNAi to the 40S ribosome. The eIF-3 complex specifically targets and initiates translation of a subset of mRNAs involved in cell proliferation. This subunit can bind 18S rRNA. The chain is Eukaryotic translation initiation factor 3 subunit G-1 from Drosophila ananassae (Fruit fly).